The following is a 616-amino-acid chain: Dihydroxy-acid dehydratase (616 aa).

D81 contacts Mg(2+). C122 provides a ligand contact to [2Fe-2S] cluster. Positions 123 and 124 each coordinate Mg(2+). At K124 the chain carries N6-carboxylysine. [2Fe-2S] cluster is bound at residue C195. Residue E491 participates in Mg(2+) binding. Catalysis depends on S517, which acts as the Proton acceptor.

Belongs to the IlvD/Edd family. As to quaternary structure, homodimer. [2Fe-2S] cluster serves as cofactor. Requires Mg(2+) as cofactor.

It carries out the reaction (2R)-2,3-dihydroxy-3-methylbutanoate = 3-methyl-2-oxobutanoate + H2O. The enzyme catalyses (2R,3R)-2,3-dihydroxy-3-methylpentanoate = (S)-3-methyl-2-oxopentanoate + H2O. It participates in amino-acid biosynthesis; L-isoleucine biosynthesis; L-isoleucine from 2-oxobutanoate: step 3/4. Its pathway is amino-acid biosynthesis; L-valine biosynthesis; L-valine from pyruvate: step 3/4. Functions in the biosynthesis of branched-chain amino acids. Catalyzes the dehydration of (2R,3R)-2,3-dihydroxy-3-methylpentanoate (2,3-dihydroxy-3-methylvalerate) into 2-oxo-3-methylpentanoate (2-oxo-3-methylvalerate) and of (2R)-2,3-dihydroxy-3-methylbutanoate (2,3-dihydroxyisovalerate) into 2-oxo-3-methylbutanoate (2-oxoisovalerate), the penultimate precursor to L-isoleucine and L-valine, respectively. The chain is Dihydroxy-acid dehydratase from Escherichia fergusonii (strain ATCC 35469 / DSM 13698 / CCUG 18766 / IAM 14443 / JCM 21226 / LMG 7866 / NBRC 102419 / NCTC 12128 / CDC 0568-73).